Consider the following 447-residue polypeptide: Elongation factor 1-alpha (447 aa).

The 226-residue stretch at 5-230 (KVHINIVVIG…DNINEPKRPS (226 aa)) folds into the tr-type G domain. The tract at residues 14–21 (GHVDSGKS) is G1. Residue 14-21 (GHVDSGKS) coordinates GTP. N6,N6-dimethyllysine is present on lysine 55. Positions 70 to 74 (GITID) are G2. An N6,N6,N6-trimethyllysine modification is found at lysine 79. The G3 stretch occupies residues 91–94 (DAPG). Residues 91-95 (DAPGH) and 153-156 (NKMD) each bind GTP. Positions 153–156 (NKMD) are G4. N6,N6,N6-trimethyllysine is present on lysine 187. Residues 194-196 (SGF) form a G5 region. Lysine 261 is subject to N6-methyllysine. A 5-glutamyl glycerylphosphorylethanolamine modification is found at glutamate 289. Lysine 306 bears the N6,N6,N6-trimethyllysine mark. Position 362 is a 5-glutamyl glycerylphosphorylethanolamine (glutamate 362). An N6,N6,N6-trimethyllysine modification is found at lysine 396.

Belongs to the TRAFAC class translation factor GTPase superfamily. Classic translation factor GTPase family. EF-Tu/EF-1A subfamily.

Its subcellular location is the cytoplasm. Its function is as follows. This protein promotes the GTP-dependent binding of aminoacyl-tRNA to the A-site of ribosomes during protein biosynthesis. This Vicia faba (Broad bean) protein is Elongation factor 1-alpha.